Here is a 173-residue protein sequence, read N- to C-terminus: RNA pyrophosphohydrolase (173 aa).

One can recognise a Nudix hydrolase domain in the interval 11 to 164 (PYRRCVGVVV…KKHVYRKVVS (154 aa)). Residues 52 to 73 (GGIDEGEEPLDAACRELYEETG) carry the Nudix box motif.

Belongs to the Nudix hydrolase family. RppH subfamily. A divalent metal cation serves as cofactor.

Accelerates the degradation of transcripts by removing pyrophosphate from the 5'-end of triphosphorylated RNA, leading to a more labile monophosphorylated state that can stimulate subsequent ribonuclease cleavage. In Bartonella quintana (strain Toulouse) (Rochalimaea quintana), this protein is RNA pyrophosphohydrolase.